We begin with the raw amino-acid sequence, 204 residues long: Heart- and neural crest derivatives-expressed protein 1 (204 aa).

Disordered stretches follow at residues 1 to 24, 57 to 115, and 172 to 204; these read MNLV…HPAH, APDF…RTES, and LKKA…EKRD. Basic residues-rich tracts occupy residues 8 to 22 and 98 to 110; these read AHHH…HPHP and LGRR…KKER. One can recognise a bHLH domain in the interval 100-152; sequence RRKGSGPKKERRRTESINSAFAELRECIPNVPADTKLSKIKTLRLATSYIAYL. Phosphothreonine; by PLK4 is present on T113. S115 carries the phosphoserine; by PLK4 modification.

As to quaternary structure, efficient DNA binding requires dimerization with another bHLH protein. Forms homodimers and heterodimers with TCF3 gene products E12 and E47, HAND2 and HEY1, HEY2 and HEYL (hairy-related transcription factors). Interacts with MDFIC. Interacts with SOX15; the interaction enhances HAND1-induced differentiation of trophoblast giant cells. In terms of processing, phosphorylation by PLK4 disrupts the interaction with MDFIC and leads to translocation into the nucleoplasm, allowing dimerization and transcription factor activity.

It localises to the nucleus. Its subcellular location is the nucleoplasm. The protein localises to the nucleolus. Functionally, transcription factor that plays an essential role in both trophoblast giant cell differentiation and in cardiac morphogenesis. Binds the DNA sequence 5'-NRTCTG-3' (non-canonical E-box). Acts as a transcriptional repressor of SOX15. In the adult, could be required for ongoing expression of cardiac-specific genes. The protein is Heart- and neural crest derivatives-expressed protein 1 (HAND1) of Ovis aries (Sheep).